The following is a 270-amino-acid chain: Formamidopyrimidine-DNA glycosylase (270 aa).

The active-site Schiff-base intermediate with DNA is the Pro-2. The active-site Proton donor is the Glu-3. The active-site Proton donor; for beta-elimination activity is the Lys-57. His-90, Arg-109, and Lys-151 together coordinate DNA. The FPG-type zinc-finger motif lies at 236–270; sequence RVYGRKGQACEVCESEIQSVTLGQRNTFFCEQCQK. Arg-260 (proton donor; for delta-elimination activity) is an active-site residue.

It belongs to the FPG family. In terms of assembly, monomer. The cofactor is Zn(2+).

The enzyme catalyses Hydrolysis of DNA containing ring-opened 7-methylguanine residues, releasing 2,6-diamino-4-hydroxy-5-(N-methyl)formamidopyrimidine.. It catalyses the reaction 2'-deoxyribonucleotide-(2'-deoxyribose 5'-phosphate)-2'-deoxyribonucleotide-DNA = a 3'-end 2'-deoxyribonucleotide-(2,3-dehydro-2,3-deoxyribose 5'-phosphate)-DNA + a 5'-end 5'-phospho-2'-deoxyribonucleoside-DNA + H(+). Involved in base excision repair of DNA damaged by oxidation or by mutagenic agents. Acts as a DNA glycosylase that recognizes and removes damaged bases. Has a preference for oxidized purines, such as 7,8-dihydro-8-oxoguanine (8-oxoG). Has AP (apurinic/apyrimidinic) lyase activity and introduces nicks in the DNA strand. Cleaves the DNA backbone by beta-delta elimination to generate a single-strand break at the site of the removed base with both 3'- and 5'-phosphates. The polypeptide is Formamidopyrimidine-DNA glycosylase (Pseudoalteromonas atlantica (strain T6c / ATCC BAA-1087)).